Consider the following 473-residue polypeptide: Homeobox protein ATH1 (473 aa).

The tract at residues 205 to 221 is SR/KY domain; that stretch reads SKYLHSVQEILSHFAAY. Positions 266 to 336 are BELL domain; it reads QRRALEAKKT…NLRERICKKI (71 aa). The segment at residues 372–434 is a DNA-binding region (homeobox); sequence IWRPQRGLPE…NARVRLWKPM (63 aa). Residues 448–473 form a disordered region; that stretch reads NNSHIQPNGPTLRMPKSVMMSQAMHK.

The protein belongs to the TALE/BELL homeobox family. In terms of assembly, may form heterodimeric complex with the TALE/KNOX protein STM. As to expression, most abundant in flowers.

The protein resides in the nucleus. In terms of biological role, transcription factor which may be involved in the signal transduction pathway downstream of the COP1 gene. Controls floral competency as a specific activator of FLC expression. Is responsive of the nuclear import of SHOOT MERISTEMLESS (STM). This is Homeobox protein ATH1 (ATH1) from Arabidopsis thaliana (Mouse-ear cress).